Reading from the N-terminus, the 889-residue chain is Translation initiation factor IF-2 (889 aa).

Residues 115 to 236 (EAEAQAKAEA…EAERYSDHHI (122 aa)) are compositionally biased toward basic and acidic residues. The interval 115–293 (EAEAQAKAEA…RNRSTAPESM (179 aa)) is disordered. The segment covering 257 to 270 (GRRARNKNTAKTKR) has biased composition (basic residues). The span at 271 to 280 (GGKDARDGRE) shows a compositional bias: basic and acidic residues. One can recognise a tr-type G domain in the interval 389 to 558 (PRAPVVTIMG…LLQAEVLELK (170 aa)). The G1 stretch occupies residues 398–405 (GHVDHGKT). Residue 398–405 (GHVDHGKT) coordinates GTP. The interval 423–427 (GITQH) is G2. Residues 444-447 (DTPG) are G3. GTP-binding positions include 444–448 (DTPGH) and 498–501 (NKMD). The G4 stretch occupies residues 498–501 (NKMD). The segment at 534–536 (SAK) is G5.

It belongs to the TRAFAC class translation factor GTPase superfamily. Classic translation factor GTPase family. IF-2 subfamily.

The protein localises to the cytoplasm. One of the essential components for the initiation of protein synthesis. Protects formylmethionyl-tRNA from spontaneous hydrolysis and promotes its binding to the 30S ribosomal subunits. Also involved in the hydrolysis of GTP during the formation of the 70S ribosomal complex. This chain is Translation initiation factor IF-2, found in Shewanella sp. (strain ANA-3).